A 214-amino-acid polypeptide reads, in one-letter code: MMLDPINHHFQAHEEAYYSRFFNEQRGLHMIKVLPGGVYVSGQEELICTGLGSCVSACIWDPVKRVGGMNHFLLPFHNHFEEKHWHADELLSGASRYGSYAMEMLLNQLLSLGARRERLRMKLFGGAQMMGFHSMIGEKNVEFVLHYAEQEGLEVVAYDLGGLEPRKIMFDPLTGKAWLKRIPFAEINRLRREEERYAHTLEKQTDKGSEVELF.

The protein belongs to the CheD family.

It carries out the reaction L-glutaminyl-[protein] + H2O = L-glutamyl-[protein] + NH4(+). Functionally, probably deamidates glutamine residues to glutamate on methyl-accepting chemotaxis receptors (MCPs), playing an important role in chemotaxis. The protein is Probable chemoreceptor glutamine deamidase CheD of Vibrio vulnificus (strain YJ016).